A 466-amino-acid chain; its full sequence is tRNA modification GTPase MnmE (466 aa).

(6S)-5-formyl-5,6,7,8-tetrahydrofolate-binding residues include R24, E85, and K128. The TrmE-type G domain maps to 224 to 384 (GLNIVLAGQP…LRTELLHLVG (161 aa)). N234 is a K(+) binding site. Residues 234–239 (NVGKSS), 253–259 (TPIAGTT), and 278–281 (DTAG) each bind GTP. S238 contacts Mg(2+). K(+)-binding residues include T253, I255, and T258. Position 259 (T259) interacts with Mg(2+). K466 contacts (6S)-5-formyl-5,6,7,8-tetrahydrofolate.

This sequence belongs to the TRAFAC class TrmE-Era-EngA-EngB-Septin-like GTPase superfamily. TrmE GTPase family. As to quaternary structure, homodimer. Heterotetramer of two MnmE and two MnmG subunits. K(+) serves as cofactor.

The protein localises to the cytoplasm. Its function is as follows. Exhibits a very high intrinsic GTPase hydrolysis rate. Involved in the addition of a carboxymethylaminomethyl (cmnm) group at the wobble position (U34) of certain tRNAs, forming tRNA-cmnm(5)s(2)U34. This is tRNA modification GTPase MnmE from Herminiimonas arsenicoxydans.